We begin with the raw amino-acid sequence, 195 residues long: 3-isopropylmalate dehydratase small subunit (195 aa).

The protein belongs to the LeuD family. LeuD type 1 subfamily. In terms of assembly, heterodimer of LeuC and LeuD.

It carries out the reaction (2R,3S)-3-isopropylmalate = (2S)-2-isopropylmalate. The protein operates within amino-acid biosynthesis; L-leucine biosynthesis; L-leucine from 3-methyl-2-oxobutanoate: step 2/4. Catalyzes the isomerization between 2-isopropylmalate and 3-isopropylmalate, via the formation of 2-isopropylmaleate. In Thermobifida fusca (strain YX), this protein is 3-isopropylmalate dehydratase small subunit.